A 116-amino-acid chain; its full sequence is Protein Rev (116 aa).

A phosphoserine; by host CK2 mark is found at Ser-5 and Ser-8. Residues 18 to 26 (IIKILYQSN) form a homomultimerization region. Positions 24–49 (QSNPHPSPEGTRQARRNRRRRWRERQ) are disordered. The short motif at 34–50 (TRQARRNRRRRWRERQR) is the Nuclear localization signal and RNA-binding (RRE) element. Residues 36–47 (QARRNRRRRWRE) are compositionally biased toward basic residues. Residues 73–84 (LQLPPLDRLTLD) carry the Nuclear export signal and binding to XPO1 motif. Ser-92 and Ser-99 each carry phosphoserine; by host.

This sequence belongs to the HIV-1 REV protein family. In terms of assembly, homomultimer; when bound to the RRE. Multimeric assembly is essential for activity and may involve XPO1. Binds to human KPNB1, XPO1, TNPO1, RANBP5 and IPO7. Interacts with the viral Integrase. Interacts with human KHDRBS1. Interacts with human NAP1; this interaction decreases Rev multimerization and stimulates its activity. Interacts with human DEAD-box helicases DDX3 and DDX24; these interactions may serve for viral RNA export to the cytoplasm and packaging, respectively. Interacts with human PSIP1; this interaction may inhibit HIV-1 DNA integration by promoting dissociation of the Integrase-LEDGF/p75 complex. In terms of processing, asymmetrically arginine dimethylated at one site by host PRMT6. Methylation impairs the RNA-binding activity and export of viral RNA from the nucleus to the cytoplasm. Post-translationally, phosphorylated by protein kinase CK2. Presence of, and maybe binding to the N-terminus of the regulatory beta subunit of CK2 is necessary for CK2-mediated Rev's phosphorylation.

The protein localises to the host nucleus. It localises to the host nucleolus. Its subcellular location is the host cytoplasm. Escorts unspliced or incompletely spliced viral pre-mRNAs (late transcripts) out of the nucleus of infected cells. These pre-mRNAs carry a recognition sequence called Rev responsive element (RRE) located in the env gene, that is not present in fully spliced viral mRNAs (early transcripts). This function is essential since most viral proteins are translated from unspliced or partially spliced pre-mRNAs which cannot exit the nucleus by the pathway used by fully processed cellular mRNAs. Rev itself is translated from a fully spliced mRNA that readily exits the nucleus. Rev's nuclear localization signal (NLS) binds directly to KPNB1/Importin beta-1 without previous binding to KPNA1/Importin alpha-1. KPNB1 binds to the GDP bound form of RAN (Ran-GDP) and targets Rev to the nucleus. In the nucleus, the conversion from Ran-GDP to Ran-GTP dissociates Rev from KPNB1 and allows Rev's binding to the RRE in viral pre-mRNAs. Rev multimerization on the RRE via cooperative assembly exposes its nuclear export signal (NES) to the surface. Rev can then form a complex with XPO1/CRM1 and Ran-GTP, leading to nuclear export of the complex. Conversion from Ran-GTP to Ran-GDP mediates dissociation of the Rev/RRE/XPO1/RAN complex, so that Rev can return to the nucleus for a subsequent round of export. Beside KPNB1, also seems to interact with TNPO1/Transportin-1, RANBP5/IPO5 and IPO7/RANBP7 for nuclear import. The nucleoporin-like HRB/RIP is an essential cofactor that probably indirectly interacts with Rev to release HIV RNAs from the perinuclear region to the cytoplasm. This is Protein Rev from Human immunodeficiency virus type 1 group M subtype B (isolate SF33) (HIV-1).